A 126-amino-acid polypeptide reads, in one-letter code: Fluoride-specific ion channel FluC (126 aa).

The next 4 membrane-spanning stretches (helical) occupy residues 4-24, 33-53, 67-87, and 97-117; these read PLLS…FLGL, IPLG…FAMA, FVIT…IEIV, and MAML…CLGL. The Na(+) site is built by Gly-74 and Thr-77.

This sequence belongs to the fluoride channel Fluc/FEX (TC 1.A.43) family.

The protein resides in the cell inner membrane. It carries out the reaction fluoride(in) = fluoride(out). Its activity is regulated as follows. Na(+) is not transported, but it plays an essential structural role and its presence is essential for fluoride channel function. Fluoride-specific ion channel. Important for reducing fluoride concentration in the cell, thus reducing its toxicity. The chain is Fluoride-specific ion channel FluC from Acinetobacter baumannii (strain SDF).